The sequence spans 104 residues: L-rhamnose mutarotase (104 aa).

Substrate is bound at residue tyrosine 18. The active-site Proton donor is histidine 22. Residues tyrosine 41 and 76-77 each bind substrate; that span reads WW.

It belongs to the rhamnose mutarotase family. As to quaternary structure, homodimer.

It is found in the cytoplasm. It catalyses the reaction alpha-L-rhamnose = beta-L-rhamnose. It participates in carbohydrate metabolism; L-rhamnose metabolism. In terms of biological role, involved in the anomeric conversion of L-rhamnose. This chain is L-rhamnose mutarotase, found in Klebsiella pneumoniae subsp. pneumoniae (strain ATCC 700721 / MGH 78578).